The sequence spans 759 residues: Arylphorin subunit A4 (759 aa).

Positions 1–16 (MKIAIVLLAIIALVAA) are cleaved as a signal peptide.

This sequence belongs to the hemocyanin family. In terms of assembly, heterohexamer. In terms of tissue distribution, fat body.

The protein resides in the secreted. The protein localises to the extracellular space. Its function is as follows. Arylphorin is a larval storage protein (LSP) which may serve as a storage protein used primarily as a source of aromatic amino acids for protein synthesis during metamorphosis. It is a constituent of the sclerotizing system of the cuticle, and serves as a carrier for ecdysteroid hormone. In Calliphora vicina (Blue blowfly), this protein is Arylphorin subunit A4.